We begin with the raw amino-acid sequence, 131 residues long: Profilin-7 (131 aa).

Residues C13 and C115 are joined by a disulfide bond. Residues 81-97 carry the Involved in PIP2 interaction motif; it reads AVIRGKKGAGGITIKKT. Phosphothreonine is present on T111.

It belongs to the profilin family. Occurs in many kinds of cells as a complex with monomeric actin in a 1:1 ratio. Post-translationally, phosphorylated by MAP kinases.

The protein resides in the cytoplasm. Its subcellular location is the cytoskeleton. In terms of biological role, binds to actin and affects the structure of the cytoskeleton. At high concentrations, profilin prevents the polymerization of actin, whereas it enhances it at low concentrations. This Olea europaea (Common olive) protein is Profilin-7.